A 59-amino-acid polypeptide reads, in one-letter code: Large ribosomal subunit protein bL32 (59 aa).

The interval 1–59 (MAVQQNKKSPSKRGMHRSHDALTAPALSVDSTTGEVHRPHHISPNGMYRGRKVVKAKGE) is disordered. The segment covering 49 to 59 (RGRKVVKAKGE) has biased composition (basic residues).

Belongs to the bacterial ribosomal protein bL32 family.

The protein is Large ribosomal subunit protein bL32 (rpmF) of Neisseria meningitidis serogroup B (strain ATCC BAA-335 / MC58).